Consider the following 873-residue polypeptide: Leucine--tRNA ligase (873 aa).

The 'HIGH' region motif lies at 42–52 (PYPSGKLHMGH). The 'KMSKS' region motif lies at 628–632 (KMAKS). Residue Lys-631 coordinates ATP.

It belongs to the class-I aminoacyl-tRNA synthetase family.

It localises to the cytoplasm. It carries out the reaction tRNA(Leu) + L-leucine + ATP = L-leucyl-tRNA(Leu) + AMP + diphosphate. The chain is Leucine--tRNA ligase from Aromatoleum aromaticum (strain DSM 19018 / LMG 30748 / EbN1) (Azoarcus sp. (strain EbN1)).